Here is a 185-residue protein sequence, read N- to C-terminus: Elongation factor P (185 aa).

Belongs to the elongation factor P family.

The protein resides in the cytoplasm. Its pathway is protein biosynthesis; polypeptide chain elongation. Involved in peptide bond synthesis. Stimulates efficient translation and peptide-bond synthesis on native or reconstituted 70S ribosomes in vitro. Probably functions indirectly by altering the affinity of the ribosome for aminoacyl-tRNA, thus increasing their reactivity as acceptors for peptidyl transferase. This is Elongation factor P from Staphylococcus carnosus (strain TM300).